Here is a 345-residue protein sequence, read N- to C-terminus: Phosphoribosylformylglycinamidine cyclo-ligase (345 aa).

It belongs to the AIR synthase family.

It is found in the cytoplasm. It carries out the reaction 2-formamido-N(1)-(5-O-phospho-beta-D-ribosyl)acetamidine + ATP = 5-amino-1-(5-phospho-beta-D-ribosyl)imidazole + ADP + phosphate + H(+). It functions in the pathway purine metabolism; IMP biosynthesis via de novo pathway; 5-amino-1-(5-phospho-D-ribosyl)imidazole from N(2)-formyl-N(1)-(5-phospho-D-ribosyl)glycinamide: step 2/2. This is Phosphoribosylformylglycinamidine cyclo-ligase from Escherichia coli O6:K15:H31 (strain 536 / UPEC).